A 286-amino-acid polypeptide reads, in one-letter code: Diaminopimelate epimerase (286 aa).

The substrate site is built by Asn22, Gln56, and Asn76. Cys85 (proton donor) is an active-site residue. Substrate-binding positions include 86-87 (GN), Asn169, Asn202, and 220-221 (ER). Cys229 acts as the Proton acceptor in catalysis. 230 to 231 (GS) is a binding site for substrate.

Belongs to the diaminopimelate epimerase family. As to quaternary structure, homodimer.

It localises to the cytoplasm. The enzyme catalyses (2S,6S)-2,6-diaminopimelate = meso-2,6-diaminopimelate. It functions in the pathway amino-acid biosynthesis; L-lysine biosynthesis via DAP pathway; DL-2,6-diaminopimelate from LL-2,6-diaminopimelate: step 1/1. Catalyzes the stereoinversion of LL-2,6-diaminopimelate (L,L-DAP) to meso-diaminopimelate (meso-DAP), a precursor of L-lysine and an essential component of the bacterial peptidoglycan. The protein is Diaminopimelate epimerase of Buchnera aphidicola subsp. Baizongia pistaciae (strain Bp).